Here is a 346-residue protein sequence, read N- to C-terminus: MLIQDGDKLINTRNWAELVKPEQLVRDPKSNELYGKFICEPLERGFGTTIGNSLRRVLLSSMQGAAAVAVKIEGVQHEFTTIEGVMEDVTEIVLNIKQIRFAMTTDEPQFLTLRVNKQGVVTAADIQENQNVKVLNPEQIIATLSEKMDMEMTFEIRMGKGYVPADMHEGLVNEIGHIILDSSFSPIRKVAYSVEQARVGQMTNYDKLIIEVFTDGSVTPEDAIAYSAKILKDQLSVFINFDEMGSEQEESKESDLDLNPNLFKSIDELELSVRATNCLKAANIRIVGELVQRTEQTMLKTKNFGRKSLDEIRRVLDSMELKFGMVLEDFDKKHQEWLKRKEKNEA.

Residues 1–242 are alpha N-terminal domain (alpha-NTD); it reads MLIQDGDKLI…DQLSVFINFD (242 aa). The segment at 258–346 is alpha C-terminal domain (alpha-CTD); it reads LNPNLFKSID…WLKRKEKNEA (89 aa).

This sequence belongs to the RNA polymerase alpha chain family. As to quaternary structure, homodimer. The RNAP catalytic core consists of 2 alpha, 1 beta, 1 beta' and 1 omega subunit. When a sigma factor is associated with the core the holoenzyme is formed, which can initiate transcription.

It carries out the reaction RNA(n) + a ribonucleoside 5'-triphosphate = RNA(n+1) + diphosphate. Its function is as follows. DNA-dependent RNA polymerase catalyzes the transcription of DNA into RNA using the four ribonucleoside triphosphates as substrates. This chain is DNA-directed RNA polymerase subunit alpha, found in Maridesulfovibrio salexigens (strain ATCC 14822 / DSM 2638 / NCIMB 8403 / VKM B-1763) (Desulfovibrio salexigens).